The following is a 399-amino-acid chain: Tyrosine--tRNA ligase 2 (399 aa).

Residues 43–52 (PTAPDLHLGH) carry the 'HIGH' region motif. The 'KMSKS' region motif lies at 227 to 231 (KMSKS). ATP is bound at residue Lys-230. Residues 338-398 (ITLLDLCSVA…IGKRYKFRIG (61 aa)) enclose the S4 RNA-binding domain.

Belongs to the class-I aminoacyl-tRNA synthetase family. TyrS type 2 subfamily. In terms of assembly, homodimer.

Its subcellular location is the cytoplasm. The enzyme catalyses tRNA(Tyr) + L-tyrosine + ATP = L-tyrosyl-tRNA(Tyr) + AMP + diphosphate + H(+). Its function is as follows. Catalyzes the attachment of tyrosine to tRNA(Tyr) in a two-step reaction: tyrosine is first activated by ATP to form Tyr-AMP and then transferred to the acceptor end of tRNA(Tyr). The sequence is that of Tyrosine--tRNA ligase 2 from Photorhabdus laumondii subsp. laumondii (strain DSM 15139 / CIP 105565 / TT01) (Photorhabdus luminescens subsp. laumondii).